The sequence spans 38 residues: Potassium channel toxin alpha-KTx 2.13 (38 aa).

Disulfide bonds link cysteine 7/cysteine 29, cysteine 13/cysteine 34, and cysteine 17/cysteine 36.

This sequence belongs to the short scorpion toxin superfamily. Potassium channel inhibitor family. Alpha-KTx 02 subfamily. In terms of tissue distribution, expressed by the venom gland.

It is found in the secreted. In terms of biological role, selective inhibitor of voltage-gated potassium channels, blocks the Kv1.2/KCNA2 (Kd=1.3 nM) and Kv1.3/KCNA3 (Kd=7.2 nM) channels. Association and dissociation rates of the toxin are slower for Kv1.2/KCNA2 than for Kv1.3/KCNA3. In Centruroides suffusus (Durango bark scorpion), this protein is Potassium channel toxin alpha-KTx 2.13.